Here is a 230-residue protein sequence, read N- to C-terminus: 5'-methylthioadenosine/S-adenosylhomocysteine nucleosidase (230 aa).

The Proton acceptor role is filled by Glu-12. Substrate contacts are provided by residues Gly-78, Met-153, and Met-174–Glu-175. Asp-198 functions as the Proton donor in the catalytic mechanism.

This sequence belongs to the PNP/UDP phosphorylase family. MtnN subfamily.

It carries out the reaction S-adenosyl-L-homocysteine + H2O = S-(5-deoxy-D-ribos-5-yl)-L-homocysteine + adenine. The catalysed reaction is S-methyl-5'-thioadenosine + H2O = 5-(methylsulfanyl)-D-ribose + adenine. It catalyses the reaction 5'-deoxyadenosine + H2O = 5-deoxy-D-ribose + adenine. It functions in the pathway amino-acid biosynthesis; L-methionine biosynthesis via salvage pathway; S-methyl-5-thio-alpha-D-ribose 1-phosphate from S-methyl-5'-thioadenosine (hydrolase route): step 1/2. Its function is as follows. Catalyzes the irreversible cleavage of the glycosidic bond in both 5'-methylthioadenosine (MTA) and S-adenosylhomocysteine (SAH/AdoHcy) to adenine and the corresponding thioribose, 5'-methylthioribose and S-ribosylhomocysteine, respectively. Also cleaves 5'-deoxyadenosine, a toxic by-product of radical S-adenosylmethionine (SAM) enzymes, into 5-deoxyribose and adenine. The polypeptide is 5'-methylthioadenosine/S-adenosylhomocysteine nucleosidase (Tolumonas auensis (strain DSM 9187 / NBRC 110442 / TA 4)).